Reading from the N-terminus, the 271-residue chain is Formamidopyrimidine-DNA glycosylase (271 aa).

P2 functions as the Schiff-base intermediate with DNA in the catalytic mechanism. Residue E3 is the Proton donor of the active site. K57 functions as the Proton donor; for beta-elimination activity in the catalytic mechanism. DNA is bound by residues H90, R109, and K151. The FPG-type zinc finger occupies 236–270 (HVYGRGGETCTQCGNLLSEIRLGQRTTVFCGICQT). The active-site Proton donor; for delta-elimination activity is R260.

It belongs to the FPG family. In terms of assembly, monomer. Zn(2+) serves as cofactor.

The catalysed reaction is Hydrolysis of DNA containing ring-opened 7-methylguanine residues, releasing 2,6-diamino-4-hydroxy-5-(N-methyl)formamidopyrimidine.. It carries out the reaction 2'-deoxyribonucleotide-(2'-deoxyribose 5'-phosphate)-2'-deoxyribonucleotide-DNA = a 3'-end 2'-deoxyribonucleotide-(2,3-dehydro-2,3-deoxyribose 5'-phosphate)-DNA + a 5'-end 5'-phospho-2'-deoxyribonucleoside-DNA + H(+). Involved in base excision repair of DNA damaged by oxidation or by mutagenic agents. Acts as a DNA glycosylase that recognizes and removes damaged bases. Has a preference for oxidized purines, such as 7,8-dihydro-8-oxoguanine (8-oxoG). Has AP (apurinic/apyrimidinic) lyase activity and introduces nicks in the DNA strand. Cleaves the DNA backbone by beta-delta elimination to generate a single-strand break at the site of the removed base with both 3'- and 5'-phosphates. This is Formamidopyrimidine-DNA glycosylase from Shewanella sp. (strain MR-7).